The primary structure comprises 393 residues: Short chain dehydrogenase sirQ (393 aa).

Residue Leu54 coordinates NADP(+). Catalysis depends on Ser233, which acts as the Proton donor. The active-site Lowers pKa of active site Tyr is Lys259. Ala286 is an NADP(+) binding site.

Belongs to the short-chain dehydrogenases/reductases (SDR) family. Highly divergent.

It functions in the pathway mycotoxin biosynthesis. Its function is as follows. Short chain dehydrogenase; part of the gene cluster that mediates the biosynthesis of sirodesmin PL, an epipolythiodioxopiperazine (ETP) characterized by a disulfide bridged cyclic dipeptide and that acts as a phytotoxin which is involved in the blackleg didease of canola. SirD catalyzes the O-prenylation of L-tyrosine (L-Tyr) in the presence of dimethylallyl diphosphate (DMAPP) to yield 4-O-dimethylallyl-L-Tyr, and therefore represents probably the first pathway-specific enzyme in the biosynthesis of sirodesmin PL. 4-O-dimethylallyl-L-Tyr, then undergoes condensation with L-Ser in a reaction catalyzed by the non-ribosomal peptide synthase sirP to form the diketopiperazine (DKP) backbone. Further bishydroxylation of the DKP performed by the cytochrome P450 monooxygenase sirC leads to the production of the intermediate phomamide. This step is essential to form the reactive thiol group required for toxicity of sirodesmin PL. The next steps of sirodesmin biosynthesis are not well understood yet, but some predictions could be made from intermediate compounds identification. Phomamide is converted into phomalizarine via oxidation, probably by sirT. Further oxidation, methylation (by sirM or sirN) and reduction steps convert phomalizarine to deacetyl sirodesmin. Finally, acetyltransferase sirH probably acetylates deacetyl sirodesmin to produce sirodesmin PL. In Leptosphaeria maculans (Blackleg fungus), this protein is Short chain dehydrogenase sirQ.